The primary structure comprises 123 residues: Small ribosomal subunit protein uS12 (123 aa).

A disordered region spans residues 1-29 (MPTINQLVRKGRVPQKAKSKVPAMEQNPQ). The span at 9–19 (RKGRVPQKAKS) shows a compositional bias: basic residues. D89 is modified (3-methylthioaspartic acid).

The protein belongs to the universal ribosomal protein uS12 family. In terms of assembly, part of the 30S ribosomal subunit. Contacts proteins S8 and S17. May interact with IF1 in the 30S initiation complex.

With S4 and S5 plays an important role in translational accuracy. Its function is as follows. Interacts with and stabilizes bases of the 16S rRNA that are involved in tRNA selection in the A site and with the mRNA backbone. Located at the interface of the 30S and 50S subunits, it traverses the body of the 30S subunit contacting proteins on the other side and probably holding the rRNA structure together. The combined cluster of proteins S8, S12 and S17 appears to hold together the shoulder and platform of the 30S subunit. The protein is Small ribosomal subunit protein uS12 of Erythrobacter litoralis (strain HTCC2594).